Consider the following 452-residue polypeptide: Tripartite motif-containing protein 49D (452 aa).

An RING-type zinc finger spans residues 15-56 (CPICLNYFIDPVTIDCGHSFCRPCFYLNWQDIPILTQCFECL). The segment at 88–129 (SEEQMCGTHRETKKIFCEVDRSLLCLLCSSSLEHRYHRHCPA) adopts a B box-type zinc-finger fold. Zn(2+) is bound by residues Cys93, His96, Cys115, and His121. The B30.2/SPRY domain occupies 269–452 (ELRAGPITGL…LRPIFCCVHL (184 aa)).

It belongs to the TRIM/RBCC family.

This is Tripartite motif-containing protein 49D from Homo sapiens (Human).